We begin with the raw amino-acid sequence, 502 residues long: Adenylate cyclase (502 aa).

Residues 1 to 25 are Cytoplasmic-facing; sequence MGDFCRRVDCKAMKFFALRSSIRTQ. The chain crosses the membrane as a helical span at residues 26–46; it reads IMASTTLLILALIGAIVTVWA. Residues 47 to 203 lie on the Lumenal, thylakoid side of the membrane; the sequence is KSESTLYHQE…RKVNLAVTNA (157 aa). The helical transmembrane segment at 204 to 226 threads the bilayer; sequence VNQALVVGFAGLNIGWICAYFLA. The region spanning 227–280 is the HAMP domain; that stretch reads QHLSDPVRRLQISVAKIAGGDLQHRADIHSRADEIGALATSVNEMSAALQISFN. Over 227–502 the chain is Cytoplasmic; the sequence is QHLSDPVRRL…EAISIYEVKA (276 aa). Positions 320–451 constitute a Guanylate cyclase domain; it reads TILFCDIRGY…DAVNVASRIE (132 aa). 2 residues coordinate Mg(2+): Asp325 and Asp369.

It belongs to the adenylyl cyclase class-3 family. It depends on Mg(2+) as a cofactor.

The protein localises to the cellular thylakoid membrane. It catalyses the reaction ATP = 3',5'-cyclic AMP + diphosphate. In terms of biological role, may function as a membrane-localized receptor protein. This Anabaena cylindrica protein is Adenylate cyclase (cya).